A 38-amino-acid chain; its full sequence is MTQSNPNDQNVELNRTSLYWGLLLIFVLAVPFSNYFFN.

Residues 17–37 (SLYWGLLLIFVLAVPFSNYFF) form a helical membrane-spanning segment.

It belongs to the PsbL family. As to quaternary structure, PSII is composed of 1 copy each of membrane proteins PsbA, PsbB, PsbC, PsbD, PsbE, PsbF, PsbH, PsbI, PsbJ, PsbK, PsbL, PsbM, PsbT, PsbX, PsbY, PsbZ, Psb30/Ycf12, at least 3 peripheral proteins of the oxygen-evolving complex and a large number of cofactors. It forms dimeric complexes.

Its subcellular location is the plastid. It is found in the chloroplast thylakoid membrane. Its function is as follows. One of the components of the core complex of photosystem II (PSII). PSII is a light-driven water:plastoquinone oxidoreductase that uses light energy to abstract electrons from H(2)O, generating O(2) and a proton gradient subsequently used for ATP formation. It consists of a core antenna complex that captures photons, and an electron transfer chain that converts photonic excitation into a charge separation. This subunit is found at the monomer-monomer interface and is required for correct PSII assembly and/or dimerization. In Cedrus deodara (Deodar cedar), this protein is Photosystem II reaction center protein L.